The sequence spans 100 residues: Urease subunit gamma (100 aa).

This sequence belongs to the urease gamma subunit family. Heterotrimer of UreA (gamma), UreB (beta) and UreC (alpha) subunits. Three heterotrimers associate to form the active enzyme.

The protein localises to the cytoplasm. The catalysed reaction is urea + 2 H2O + H(+) = hydrogencarbonate + 2 NH4(+). It functions in the pathway nitrogen metabolism; urea degradation; CO(2) and NH(3) from urea (urease route): step 1/1. This is Urease subunit gamma from Marinomonas sp. (strain MWYL1).